The sequence spans 126 residues: uncharacterized protein (126 aa).

Positions 1-24 (MKMTKLATLFLTATLSLASGAALA) are cleaved as a signal peptide. The span at 27-47 (SGAQTNNGQANAAADAGQVAP) shows a compositional bias: low complexity. The interval 27 to 126 (SGAQTNNGQA…VDTKTDGTTQ (100 aa)) is disordered. Polar residues predominate over residues 54–64 (APNNVDNNGVN). Composition is skewed to basic and acidic residues over residues 84 to 105 (MTKD…DINK) and 117 to 126 (VDTKTDGTTQ).

This is an uncharacterized protein from Shigella flexneri.